Reading from the N-terminus, the 181-residue chain is Protein Syd (181 aa).

It belongs to the Syd family.

The protein resides in the cell inner membrane. In terms of biological role, interacts with the SecY protein in vivo. May bind preferentially to an uncomplexed state of SecY, thus functioning either as a chelating agent for excess SecY in the cell or as a regulatory factor that negatively controls the translocase function. The chain is Protein Syd from Cronobacter sakazakii (strain ATCC BAA-894) (Enterobacter sakazakii).